We begin with the raw amino-acid sequence, 598 residues long: Transcriptional repressor tup12 (598 aa).

The disordered stretch occupies residues 118–177 (IASGVVPQSSKTKHGRNSVSFGKYGNAGPFNSDNSSKPLILNNGSSGGTPKNLRSPAIDS). WD repeat units follow at residues 285 to 325 (EPPI…AMVF), 332 to 371 (LITL…QQIR), 374 to 413 (DIAQ…RTVC), 415 to 454 (WDVE…KVIR), 456 to 495 (WTSS…NTIK), 510 to 549 (YKEG…RTIQ), and 552 to 585 (SPDS…ATGS).

This sequence belongs to the WD repeat TUP1 family.

Functionally, transcriptional repressor. The protein is Transcriptional repressor tup12 (tup12) of Schizosaccharomyces pombe (strain 972 / ATCC 24843) (Fission yeast).